Reading from the N-terminus, the 662-residue chain is Sodium/glucose cotransporter 1 (662 aa).

Residues 1-24 lie on the Extracellular side of the membrane; the sequence is MDSSTWSPATTATTEPLKPHERIR. Residues 25–47 form a helical membrane-spanning segment; it reads NAADISVIVIYFVVVMAVGLWAM. At 48–66 the chain is on the cytoplasmic side; it reads CSTNRGTVGGFFLAGRSMV. A helical membrane pass occupies residues 67 to 90; the sequence is WWPVGASLFASNIGSGHFVGLAGT. At 91-95 the chain is on the extracellular side; sequence GAAAG. The chain crosses the membrane as a helical span at residues 96–117; that stretch reads IATGGFEWNALIWVVVLGWLFV. Over 118 to 139 the chain is Cytoplasmic; sequence PIYIKAGVVTMPEYLRKRFGGK. A helical transmembrane segment spans residues 140-169; sequence RIQVYLSILSLMLYIFTKISADIFSGAIFI. Residues 170 to 176 are Extracellular-facing; that stretch reads TLALGLD. The chain crosses the membrane as a helical span at residues 177–193; that stretch reads LYLAIFLLLAITGLYTI. Residues 194–202 lie on the Cytoplasmic side of the membrane; sequence TGGLAAVIY. A helical membrane pass occupies residues 203-221; that stretch reads TDTLQTAIMLVGSFILTGF. Residues 222-275 are Extracellular-facing; it reads AFHEVGGYDAFMEKYMNAIPTVISDGNITIKKECYTPRADSFHIFRDPLKGDLP. Asparagine 248 carries N-linked (GlcNAc...) asparagine glycosylation. 5 cysteine pairs are disulfide-bonded: cysteine 255–cysteine 511, cysteine 255–cysteine 608, cysteine 345–cysteine 351, cysteine 355–cysteine 361, and cysteine 517–cysteine 522. The chain crosses the membrane as a helical span at residues 276–295; it reads WPGLTFGLSILALWYWCTDQ. The Cytoplasmic portion of the chain corresponds to 296–309; that stretch reads VIVQRCLSAKNMSH. The helical transmembrane segment at 310–331 threads the bilayer; sequence VKAGCVMCGYFKLLPMFVIVMP. Over 332–375 the chain is Extracellular; the sequence is GMISRVLYTEKIACTVPSECEKYCGTKVGCSNIAYPTLVVELMP. The chain crosses the membrane as a helical span at residues 376–406; sequence NGLRGLMLSVMLASLMSSLTSIFNSASTLFT. Residues 407 to 422 are Cytoplasmic-facing; the sequence is MDVYTKIRKRASEKEL. The chain crosses the membrane as a helical span at residues 423-444; sequence MIAGRLFILVLIGISIAWVPIV. Over 445–451 the chain is Extracellular; sequence QSAQSGQ. Residues 452-477 traverse the membrane as a helical segment; sequence LFDYIQSVTSYLGPPIAAVFLLAIFC. The Cytoplasmic segment spans residues 478 to 481; it reads KRVN. The helical transmembrane segment at 482 to 504 threads the bilayer; it reads EEGAFWGLVIGCMIGLARMITEF. At 505-525 the chain is on the extracellular side; sequence AYGTGSCVEPSNCPTIICGVH. The chain crosses the membrane as a helical span at residues 526-547; the sequence is YLYFAIILFVISIIIVLVVSLF. The Cytoplasmic portion of the chain corresponds to 548–642; sequence TKPIPDVHLY…TSEKPLWRTV (95 aa). Residue threonine 587 is modified to Phosphothreonine. The chain crosses the membrane as a helical span at residues 643–660; sequence VNINGIILLTVAVFCHAY. Residues 661 to 662 are Extracellular-facing; the sequence is FA.

This sequence belongs to the sodium:solute symporter (SSF) (TC 2.A.21) family. In terms of processing, N-glycosylation is not necessary for the cotransporter function.

The protein localises to the apical cell membrane. It carries out the reaction D-glucose(out) + 2 Na(+)(out) = D-glucose(in) + 2 Na(+)(in). The catalysed reaction is D-galactose(out) + 2 Na(+)(out) = D-galactose(in) + 2 Na(+)(in). Enhanced by the interaction with PDZK1IP1/MAP17; but unlike SLC5A2/SGLT2, PDZK1IP1 is not essential for SLC5A1 transporter activity. Possibly modulated by cholesterol binding. Its function is as follows. Electrogenic Na(+)-coupled sugar symporter that actively transports D-glucose or D-galactose at the plasma membrane, with a Na(+) to sugar coupling ratio of 2:1. Transporter activity is driven by a transmembrane Na(+) electrochemical gradient set by the Na(+)/K(+) pump. Has a primary role in the transport of dietary monosaccharides from enterocytes to blood. Responsible for the absorption of D-glucose or D-galactose across the apical brush-border membrane of enterocytes, whereas basolateral exit is provided by GLUT2. Additionally, functions as a D-glucose sensor in enteroendocrine cells, triggering the secretion of the incretins GCG and GIP that control food intake and energy homeostasis. Together with SGLT2, functions in reabsorption of D-glucose from glomerular filtrate, playing a nonredundant role in the S3 segment of the proximal tubules. Transports D-glucose into endometrial epithelial cells, controlling glycogen synthesis and nutritional support for the embryo as well as the decidual transformation of endometrium prior to conception. Acts as a water channel enabling passive water transport in response to the osmotic gradient created upon sugar and Na(+) uptake. Has high water conductivity comparable to aquaporins and therefore is expected to play an important role in transepithelial water permeability, especially in the small intestine. This chain is Sodium/glucose cotransporter 1 (SLC5A1), found in Sus scrofa (Pig).